A 978-amino-acid chain; its full sequence is Sensor histidine kinase TodS (978 aa).

The 72-residue stretch at 32 to 103 (CEEHARIIFD…TQKRLVETAS (72 aa)) folds into the PAS 1 domain. The PAC 1 domain occupies 108–162 (VRCDVEILGKSGGREVIAVDFSLLPICNEEGSIVYLLAEGRNITDKKKAEAMLAL). One can recognise a Histidine kinase 1 domain in the interval 187-405 (KVSHELRTPL…LFQVKLPLNA (219 aa)). His-190 carries the phosphohistidine; by autocatalysis modification. One can recognise a Response regulatory domain in the interval 452–567 (RVLIVEDNPD…ELRARVSNLV (116 aa)). Asp-500 is subject to 4-aspartylphosphate. Residues 611-681 (SEARWKAVYE…QRLANLLQGG (71 aa)) enclose the PAS 2 domain. A PAC 2 domain is found at 685–737 (YSVERSYLCKNGSTIWANASVSLMPQRVGESPVILQIIDDITEKKQAQENLNQ). One can recognise a Histidine kinase 2 domain in the interval 757–974 (YIAHEINQPL…CFLVSIPARQ (218 aa)). A Phosphohistidine modification is found at His-760.

As to quaternary structure, homodimer. Binds as a dimer to a pseudopalindromic sequence. Autophosphorylated. Activation requires a sequential transfer of a phosphate group from a His in the primary transmitter domain, to an Asp in the receiver domain and to a His in the secondary transmitter domain.

It localises to the cytoplasm. The catalysed reaction is ATP + protein L-histidine = ADP + protein N-phospho-L-histidine.. In terms of biological role, member of the two-component regulatory system TodS/TodT involved in the regulation of toluene degradation. Phosphorylates TodT via a four-step phosphorelay in response to toluene. The chain is Sensor histidine kinase TodS (todS) from Pseudomonas putida (strain ATCC 700007 / DSM 6899 / JCM 31910 / BCRC 17059 / LMG 24140 / F1).